The chain runs to 967 residues: Importin-alpha re-exporter (967 aa).

Positions 20-95 constitute an Importin N-terminal domain; that stretch reads AEEALKVWEL…KREIINLMLK (76 aa).

It belongs to the XPO2/CSE1 family. In terms of assembly, binds with high affinity to importin-alpha only in the presence of RanGTP.

It localises to the cytoplasm. The protein resides in the nucleus envelope. Export receptor for importin alpha. Mediates importin-alpha re-export from the nucleus to the cytoplasm after import substrates have been released into the nucleoplasm. The protein is Importin-alpha re-exporter (kap109) of Schizosaccharomyces pombe (strain 972 / ATCC 24843) (Fission yeast).